We begin with the raw amino-acid sequence, 1143 residues long: Exportin-T (1143 aa).

The segment at 566-593 (ARNKLRAAQGSGRTTPSSSDNVDLGPSS) is disordered. Residues 576 to 593 (SGRTTPSSSDNVDLGPSS) show a composition bias toward polar residues.

Belongs to the exportin family.

It is found in the nucleus. The protein localises to the cytoplasm. Its function is as follows. tRNA nucleus export receptor which facilitates tRNA translocation across the nuclear pore complex. Involved in pre-tRNA splicing, probably by affecting the interaction of pre-tRNA with splicing endonuclease. The chain is Exportin-T (LOS1) from Cryptococcus neoformans var. neoformans serotype D (strain JEC21 / ATCC MYA-565) (Filobasidiella neoformans).